The primary structure comprises 451 residues: Protein naked cuticle homolog 2 (451 aa).

The disordered stretch occupies residues 1-108; it reads MGKLQSKHAA…PRGPGGQRLN (108 aa). Gly-2 carries N-myristoyl glycine lipidation. A targeting to the basolateral cell membrane region spans residues 2-173; it reads GKLQSKHAAA…GSSKTLRVKL (172 aa). 2 stretches are compositionally biased toward basic and acidic residues: residues 34-63 and 89-99; these read KGAE…REDQ and DGERAANREGP. The segment at 113 to 178 is interaction with DVL1, DVL2 and DVL3; it reads QCDVSVEEDD…LRVKLTVSPE (66 aa). One can recognise an EF-hand domain in the interval 119–154; it reads EEDDRQEWTFTLYDFDNCGKVTREDMSSLMHTIYEV. Residues Asp-132, Asp-134, Lys-138, and Asp-143 each contribute to the Ca(2+) site. Disordered regions lie at residues 162–237 and 256–408; these read SSGS…PYCV and YTSR…TVEH. Positions 180 to 215 are enriched in basic and acidic residues; sequence SSKRKEGPPAGQDREPTRCRMEGELAEEPRVADRRL. The interaction with TGFA stretch occupies residues 300 to 385; sequence QVLVEHVVPA…PPPPYGHKRY (86 aa). Residues 332 to 351 show a composition bias toward low complexity; that stretch reads KSPKGSGKPPGVPASSKSGK.

This sequence belongs to the NKD family. In terms of assembly, interacts with DVL1, DVL2, DVL3 and PPP2R3A. Interacts with RNF25 and TGFA (via cytoplasmic domain). Ubiquitinated, leading to rapid proteasomal degradation. Interaction with TGFA interferes with RNF25 binding and protects against ubiquitination mediated by RNF25. As to expression, expressed in kidney, lung, pancreas and spleen.

It localises to the cell membrane. The protein localises to the cytoplasm. The protein resides in the cytoplasmic vesicle. Cell autonomous antagonist of the canonical Wnt signaling pathway. May activate a second Wnt signaling pathway that controls planar cell polarity. Required for processing of TGFA and for targeting of TGFA to the basolateral membrane of polarized epithelial cells. In Homo sapiens (Human), this protein is Protein naked cuticle homolog 2 (NKD2).